Reading from the N-terminus, the 152-residue chain is Large ribosomal subunit protein bL9 (152 aa).

Belongs to the bacterial ribosomal protein bL9 family.

Its function is as follows. Binds to the 23S rRNA. The chain is Large ribosomal subunit protein bL9 from Chlorobaculum tepidum (strain ATCC 49652 / DSM 12025 / NBRC 103806 / TLS) (Chlorobium tepidum).